The chain runs to 219 residues: Histone H1.4 (219 aa).

A compositionally biased stretch (low complexity) spans 1-15 (MSETAPAAPAAPAPA). The tract at residues 1-41 (MSETAPAAPAAPAPAEKTPIKKKARKAAGGAKRKASGPPVS) is disordered. Serine 2 carries the N-acetylserine modification. Serine 2 is modified (phosphoserine). At lysine 17 the chain carries N6-acetyllysine. Phosphothreonine is present on threonine 18. Basic residues predominate over residues 20 to 35 (IKKKARKAAGGAKRKA). Lysine 26 carries the post-translational modification N6-acetyllysine; alternate. Position 26 is an N6-methyllysine; alternate (lysine 26). Lysine 34 is modified (N6-(beta-hydroxybutyryl)lysine; alternate). Position 34 is an N6-succinyllysine; alternate (lysine 34). At serine 36 the chain carries Phosphoserine. Residues 36–109 (SGPPVSELIT…GASGSFKLNK (74 aa)) form the H15 domain. Lysine 52 carries the N6-(beta-hydroxybutyryl)lysine modification. Arginine 54 carries the post-translational modification Citrulline. Residues lysine 64, lysine 85, lysine 90, and lysine 106 each carry the N6-(beta-hydroxybutyryl)lysine modification. The segment at 92–219 (TLVQTKGTGA…KPKKTAAKKK (128 aa)) is disordered. Positions 119–140 (KAKKAGAAKAKKPAGAAKKPKK) are enriched in basic residues. Position 146 is a phosphothreonine (threonine 146). 2 stretches are compositionally biased toward basic residues: residues 149 to 160 (KSTKKTPKKAKK) and 168 to 185 (KKAK…KKAP). Serine 150 carries the ADP-ribosylserine modification. Serine 187 carries the phosphoserine modification. Residues 192 to 219 (RAVKPKAAKPKTSKPKAAKPKKTAAKKK) are compositionally biased toward basic residues.

Belongs to the histone H1/H5 family. In terms of processing, H1 histones are progressively phosphorylated during the cell cycle, becoming maximally phosphorylated during late G2 phase and M phase, and being dephosphorylated sharply thereafter. Post-translationally, acetylated at Lys-26. Deacetylated at Lys-26 by SIRT1. Citrullination at Arg-54 (H1R54ci) by PADI4 takes place within the DNA-binding site of H1 and results in its displacement from chromatin and global chromatin decondensation, thereby promoting pluripotency and stem cell maintenance. In terms of processing, ADP-ribosylated on Ser-150 in response to DNA damage.

It localises to the nucleus. The protein localises to the chromosome. Functionally, histone H1 protein binds to linker DNA between nucleosomes forming the macromolecular structure known as the chromatin fiber. Histones H1 are necessary for the condensation of nucleosome chains into higher-order structured fibers. Also acts as a regulator of individual gene transcription through chromatin remodeling, nucleosome spacing and DNA methylation. This is Histone H1.4 from Rattus norvegicus (Rat).